Here is a 249-residue protein sequence, read N- to C-terminus: Basic leucine zipper 23 (249 aa).

Residues 66–90 are disordered; it reads KVSTDDTSESSGKKRPLGNREAVRK. Positions 74-121 constitute a bZIP domain; it reads ESSGKKRPLGNREAVRKYREKKKAKAASLEDEVMRLKAVNNQLLKRLQ. Residues 78–98 form a basic motif region; sequence KKRPLGNREAVRKYREKKKAK. A leucine-zipper region spans residues 102–116; that stretch reads LEDEVMRLKAVNNQL.

It is found in the nucleus. In terms of biological role, transcription factor involved in the response to zinc ion deficiency. Binds to the consensus sequence 5'-[AG]TGTCGACA[CT]-3' also called zinc deficiency response element (ZDRE). The ZDRE sequence is conserved in the plant kingdom and present in the promoters of genes that constitute the primary response to zinc deficiency, comprising additional ZIP metal transporter genes. Required for zinc accumulation in roots. Mediates the expression of the zinc transporter ZIP12 during growth in zinc-deficient conditions. ZIP12 transporter is involved in zinc uptake in roots. The chain is Basic leucine zipper 23 from Arabidopsis thaliana (Mouse-ear cress).